A 473-amino-acid chain; its full sequence is Cysteine--tRNA ligase (473 aa).

Cys27 is a Zn(2+) binding site. A 'HIGH' region motif is present at residues 29-39 (ITPYDHVHVGH). The Zn(2+) site is built by Cys213, His238, and Glu242. The 'KMSKS' region motif lies at 271 to 275 (KMSKS). An ATP-binding site is contributed by Lys274.

This sequence belongs to the class-I aminoacyl-tRNA synthetase family. The cofactor is Zn(2+).

The protein localises to the cytoplasm. It carries out the reaction tRNA(Cys) + L-cysteine + ATP = L-cysteinyl-tRNA(Cys) + AMP + diphosphate. This chain is Cysteine--tRNA ligase, found in Pyrobaculum calidifontis (strain DSM 21063 / JCM 11548 / VA1).